The primary structure comprises 288 residues: Nucleotide-binding protein ASA_0318 (288 aa).

Residue 8 to 15 coordinates ATP; the sequence is GRSGSGKT. Residue 56 to 59 coordinates GTP; the sequence is DVRN.

This sequence belongs to the RapZ-like family.

Its function is as follows. Displays ATPase and GTPase activities. The protein is Nucleotide-binding protein ASA_0318 of Aeromonas salmonicida (strain A449).